We begin with the raw amino-acid sequence, 418 residues long: 3-isopropylmalate dehydratase large subunit (418 aa).

Residues Cys298, Cys358, and Cys361 each coordinate [4Fe-4S] cluster.

It belongs to the aconitase/IPM isomerase family. LeuC type 2 subfamily. In terms of assembly, heterodimer of LeuC and LeuD. Requires [4Fe-4S] cluster as cofactor.

The enzyme catalyses (2R,3S)-3-isopropylmalate = (2S)-2-isopropylmalate. Its pathway is amino-acid biosynthesis; L-leucine biosynthesis; L-leucine from 3-methyl-2-oxobutanoate: step 2/4. Catalyzes the isomerization between 2-isopropylmalate and 3-isopropylmalate, via the formation of 2-isopropylmaleate. The chain is 3-isopropylmalate dehydratase large subunit from Thermoanaerobacter sp. (strain X514).